A 327-amino-acid chain; its full sequence is Methionyl-tRNA formyltransferase (327 aa).

Residue 121-124 participates in (6S)-5,6,7,8-tetrahydrofolate binding; the sequence is SLLP.

The protein belongs to the Fmt family.

It catalyses the reaction L-methionyl-tRNA(fMet) + (6R)-10-formyltetrahydrofolate = N-formyl-L-methionyl-tRNA(fMet) + (6S)-5,6,7,8-tetrahydrofolate + H(+). Its function is as follows. Attaches a formyl group to the free amino group of methionyl-tRNA(fMet). The formyl group appears to play a dual role in the initiator identity of N-formylmethionyl-tRNA by promoting its recognition by IF2 and preventing the misappropriation of this tRNA by the elongation apparatus. The chain is Methionyl-tRNA formyltransferase from Burkholderia multivorans (strain ATCC 17616 / 249).